A 650-amino-acid polypeptide reads, in one-letter code: Hemocyanin subunit 2 (650 aa).

O-linked (GalNAc...) serine glycans are attached at residues serine 120 and serine 172. Cu cation is bound by residues histidine 193, histidine 197, and histidine 225. N-linked (GlcNAc...) asparagine glycosylation occurs at asparagine 309. Positions 344, 348, and 384 each coordinate Cu cation.

Belongs to the tyrosinase family. Hemocyanin subfamily. In terms of assembly, hexamer of a number of different chains, of which five have been identified. In terms of processing, contains one N-glycosylated and three O-glycosylated residues. The position of one of the O-glycosylated residues has not been determined. O-linked glycan at Ser-120 may be composed of two GalNAc, three Gal, and two N-acetylneuraminic acid units for a total 1525-Da MW. Hemolymph.

It localises to the secreted. The protein localises to the extracellular space. Its function is as follows. Hemocyanins are copper-containing oxygen carriers occurring freely dissolved in the hemolymph of many mollusks and arthropods. The sequence is that of Hemocyanin subunit 2 from Carcinus aestuarii (Green crab).